The following is a 98-amino-acid chain: Defensin (98 aa).

Disulfide bonds link cysteine 61/cysteine 88, cysteine 74/cysteine 94, and cysteine 78/cysteine 96.

The protein belongs to the invertebrate defensin family. Type 1 subfamily.

This chain is Defensin, found in Mamestra brassicae (Cabbage moth).